The sequence spans 514 residues: CUGBP Elav-like family member 2 (514 aa).

RRM domains are found at residues 44-127 (IKMF…PADS), 136-216 (RKLF…FADT), and 429-507 (ANLF…LKRS).

This sequence belongs to the CELF/BRUNOL family.

It is found in the nucleus. The protein resides in the cytoplasm. Its function is as follows. RNA-binding protein implicated in the regulation of several post-transcriptional events. May be involved in pre-mRNA alternative splicing, mRNA translation repression and stability. The protein is CUGBP Elav-like family member 2 (celf2) of Danio rerio (Zebrafish).